Reading from the N-terminus, the 320-residue chain is MRSAQVYRWQIPMDAGVVLRDRRLKTRDGLYVCLREGECEGWGEISPLPGFSQETWEEAQCVLLAWVNNWLAGDCELPQMPSVAFGVSCALAELADTLPQAANFRAAPLCNGDPDDLILKLADMPGEKVAKVKVGLYEAVRDGMVVNLLLEAIPDLHLRLDANRAWTPLKGQQFAKYVNPDYRGRIAFLEEPCKTREDSRAFARETGIAIAWDESLREPDFAFVAEEGVRAVVIKPTLTGSLEKVHEQVQAAHALGLTAVISSSIESSLGLTQLARIAAWLTPDTIPGLDTLDLMQAQQVRRWPGSTLPFVDVDALERLL.

Lys-133 serves as the catalytic Proton donor. Residues Asp-161, Glu-190, and Asp-213 each contribute to the Mg(2+) site. The Proton acceptor role is filled by Lys-235.

The protein belongs to the mandelate racemase/muconate lactonizing enzyme family. MenC type 1 subfamily. It depends on a divalent metal cation as a cofactor.

The catalysed reaction is (1R,6R)-6-hydroxy-2-succinyl-cyclohexa-2,4-diene-1-carboxylate = 2-succinylbenzoate + H2O. It functions in the pathway quinol/quinone metabolism; 1,4-dihydroxy-2-naphthoate biosynthesis; 1,4-dihydroxy-2-naphthoate from chorismate: step 4/7. It participates in quinol/quinone metabolism; menaquinone biosynthesis. Functionally, converts 2-succinyl-6-hydroxy-2,4-cyclohexadiene-1-carboxylate (SHCHC) to 2-succinylbenzoate (OSB). In Escherichia fergusonii (strain ATCC 35469 / DSM 13698 / CCUG 18766 / IAM 14443 / JCM 21226 / LMG 7866 / NBRC 102419 / NCTC 12128 / CDC 0568-73), this protein is o-succinylbenzoate synthase.